We begin with the raw amino-acid sequence, 1291 residues long: Capping protein-inhibiting regulator of actin dynamics (1291 aa).

2 positions are modified to phosphoserine: S7 and S28. Disordered regions lie at residues 48-71 (KFGQ…SSEE), 84-137 (QQDI…AGTI), 159-221 (HKLA…HEEK), 234-253 (KCKR…EQRR), 267-663 (QELL…ASHA), and 701-1238 (LGLS…TSVT). At S132 the chain carries Phosphoserine. Over residues 159 to 176 (HKLAVKPKNQRVSRKHRW) the composition is skewed to basic residues. The span at 184-199 (EPGSFESQSSLDQNGQ) shows a compositional bias: polar residues. Basic and acidic residues predominate over residues 201–221 (GEDKHIWHGEEPEPLESHEEK). The span at 270 to 291 (LEEEEEGEEEEEVKEEGEEGEE) shows a compositional bias: acidic residues. 3 stretches are compositionally biased toward basic and acidic residues: residues 302–318 (PPEE…RCTE), 326–461 (DPAR…EDAK), and 470–483 (EAKR…KETP). The segment at 324–560 (ADDPARLEAE…DLDAHCGGVD (237 aa)) is required for interaction with actin-capping proteins. T482 bears the Phosphothreonine mark. Residues S493 and S510 each carry the phosphoserine modification. Composition is skewed to basic and acidic residues over residues 506-527 (ADQR…REDL) and 534-543 (EIAEEPRGEG). Over residues 580–593 (EGTPAPEENEATAA) the composition is skewed to low complexity. Positions 594 to 612 (DIDRKVEELRWQEVDERQT) are enriched in basic and acidic residues. Residue S636 is modified to Phosphoserine. The residue at position 639 (T639) is a Phosphothreonine. The segment covering 749–778 (KNSEGDQRGDREPARAGDEPVPRARCDSRG) has biased composition (basic and acidic residues). S867 bears the Phosphoserine mark. The span at 875-888 (TESTTTLDSETTSD) shows a compositional bias: low complexity. Residues 969–983 (QERKPALSPRKDSAE) are compositionally biased toward basic and acidic residues. Residue T1033 is modified to Phosphothreonine. A Phosphoserine modification is found at S1037. Positions 1056 to 1070 (GKLDSEPSETAKESS) are enriched in basic and acidic residues. At S1076 the chain carries Phosphoserine. Composition is skewed to basic and acidic residues over residues 1081-1098 (EELK…EKKP), 1117-1141 (TGRK…EKVE), and 1157-1182 (GFRE…KLSK). Polar residues-rich tracts occupy residues 1183–1197 (ETVS…SRAS) and 1229–1238 (KSNTLPTSVT).

Directly interacts with actin-capping proteins CAPZA1, CAPZA2 and CAPZB; this interaction decreases the binding of capping proteins to actin. In terms of tissue distribution, expressed in the small intestine (at protein level).

The protein resides in the cytoplasm. It localises to the cytosol. Involved in epithelial cell integrity by acting on the dynamics of the actin cytoskeleton. Positively regulates the actin polymerization, by inhibiting the interaction of actin-capping proteins with actin. The sequence is that of Capping protein-inhibiting regulator of actin dynamics from Mus musculus (Mouse).